We begin with the raw amino-acid sequence, 443 residues long: Porin D (443 aa).

The N-terminal stretch at 1–23 (MKVMKWSAIALAVSAGSTQFAVA) is a signal peptide. Active-site residues include His-179, Asp-231, and Ser-319.

This sequence belongs to the outer membrane porin (Opr) (TC 1.B.25) family.

The protein localises to the cell outer membrane. In terms of biological role, porin with a specificity for basic amino acids. Involved in facilitated diffusion of carbapenem beta-lactam antibiotics, such as imipenem and meropenem. Also possesses serine protease activity. This is Porin D (oprD) from Pseudomonas aeruginosa (strain ATCC 15692 / DSM 22644 / CIP 104116 / JCM 14847 / LMG 12228 / 1C / PRS 101 / PAO1).